We begin with the raw amino-acid sequence, 370 residues long: NAD-dependent histone deacetylase HST4 (370 aa).

The segment at 1 to 27 is disordered; the sequence is MKQKFVLPITPPSTAEKKPQTENRCNE. Positions 15-27 are enriched in basic and acidic residues; the sequence is AEKKPQTENRCNE. Residues 75-370 enclose the Deacetylase sirtuin-type domain; sequence RHHMDRDAGF…GDCQHVTSLL (296 aa). NAD(+) is bound by residues 100–119 and 184–187; these read GAGISVAAGIPDFRSSEGIF and QNID. The Proton acceptor role is filled by His-213. Zn(2+) contacts are provided by Cys-221, Cys-224, Cys-251, and Cys-254. Residues 310 to 312, 340 to 342, and Cys-363 each bind NAD(+); these read GTS and NTS.

This sequence belongs to the sirtuin family. Class I subfamily. Zn(2+) is required as a cofactor.

Its subcellular location is the nucleus. The catalysed reaction is N(6)-acetyl-L-lysyl-[protein] + NAD(+) + H2O = 2''-O-acetyl-ADP-D-ribose + nicotinamide + L-lysyl-[protein]. Its function is as follows. NAD-dependent histone deacetylase, which contributes together with HST3 to histone H3 'Lys-56' deacetylation, regulation of telomeric silencing, proper cell cycle progression, DNA damage control, DNA recombination, and genomic maintenance. The sequence is that of NAD-dependent histone deacetylase HST4 (HST4) from Saccharomyces cerevisiae (strain ATCC 204508 / S288c) (Baker's yeast).